Reading from the N-terminus, the 264-residue chain is Thymidylate synthase (264 aa).

Arg-21 is a binding site for dUMP. A (6R)-5,10-methylene-5,6,7,8-tetrahydrofolate-binding site is contributed by His-51. 126 to 127 (RR) is a binding site for dUMP. Catalysis depends on Cys-146, which acts as the Nucleophile. Residues 166 to 169 (RSAD), Asn-177, and 207 to 209 (HLY) contribute to the dUMP site. Asp-169 provides a ligand contact to (6R)-5,10-methylene-5,6,7,8-tetrahydrofolate. Ala-263 serves as a coordination point for (6R)-5,10-methylene-5,6,7,8-tetrahydrofolate.

It belongs to the thymidylate synthase family. Bacterial-type ThyA subfamily. Homodimer.

The protein resides in the cytoplasm. It catalyses the reaction dUMP + (6R)-5,10-methylene-5,6,7,8-tetrahydrofolate = 7,8-dihydrofolate + dTMP. The protein operates within pyrimidine metabolism; dTTP biosynthesis. Functionally, catalyzes the reductive methylation of 2'-deoxyuridine-5'-monophosphate (dUMP) to 2'-deoxythymidine-5'-monophosphate (dTMP) while utilizing 5,10-methylenetetrahydrofolate (mTHF) as the methyl donor and reductant in the reaction, yielding dihydrofolate (DHF) as a by-product. This enzymatic reaction provides an intracellular de novo source of dTMP, an essential precursor for DNA biosynthesis. This is Thymidylate synthase from Bartonella bacilliformis (strain ATCC 35685 / KC583 / Herrer 020/F12,63).